The primary structure comprises 73 residues: uncharacterized protein (73 aa).

This is an uncharacterized protein from Thermoproteus tenax virus 1 (strain KRA1) (TTV1).